Here is a 184-residue protein sequence, read N- to C-terminus: dTTP/UTP pyrophosphatase (184 aa).

Catalysis depends on D67, which acts as the Proton acceptor.

Belongs to the Maf family. YhdE subfamily. The cofactor is a divalent metal cation.

It is found in the cytoplasm. It catalyses the reaction dTTP + H2O = dTMP + diphosphate + H(+). It carries out the reaction UTP + H2O = UMP + diphosphate + H(+). In terms of biological role, nucleoside triphosphate pyrophosphatase that hydrolyzes dTTP and UTP. May have a dual role in cell division arrest and in preventing the incorporation of modified nucleotides into cellular nucleic acids. This Elusimicrobium minutum (strain Pei191) protein is dTTP/UTP pyrophosphatase.